Reading from the N-terminus, the 102-residue chain is Small ribosomal subunit protein uS10 (102 aa).

This sequence belongs to the universal ribosomal protein uS10 family. As to quaternary structure, part of the 30S ribosomal subunit.

In terms of biological role, involved in the binding of tRNA to the ribosomes. In Shouchella clausii (strain KSM-K16) (Alkalihalobacillus clausii), this protein is Small ribosomal subunit protein uS10.